The chain runs to 150 residues: Deoxyuridine 5'-triphosphate nucleotidohydrolase (150 aa).

Residues 69–71, N82, 86–88, and M96 contribute to the substrate site; these read RSG and LID.

This sequence belongs to the dUTPase family. Mg(2+) is required as a cofactor.

It catalyses the reaction dUTP + H2O = dUMP + diphosphate + H(+). Its pathway is pyrimidine metabolism; dUMP biosynthesis; dUMP from dCTP (dUTP route): step 2/2. This enzyme is involved in nucleotide metabolism: it produces dUMP, the immediate precursor of thymidine nucleotides and it decreases the intracellular concentration of dUTP so that uracil cannot be incorporated into DNA. This Alcanivorax borkumensis (strain ATCC 700651 / DSM 11573 / NCIMB 13689 / SK2) protein is Deoxyuridine 5'-triphosphate nucleotidohydrolase.